A 348-amino-acid polypeptide reads, in one-letter code: Propane 2-monooxygenase, reductase component (348 aa).

Positions 5–95 (HKINFEPVDI…DCTIELLNFD (91 aa)) constitute a 2Fe-2S ferredoxin-type domain. [2Fe-2S] cluster is bound by residues Cys-39, Cys-44, Cys-47, and Cys-79. Residues 105–206 (IQDVRTEVLA…TGPYGSFTLK (102 aa)) enclose the FAD-binding FR-type domain.

It belongs to the bacterial ring-hydroxylating dioxygenase ferredoxin reductase family. In terms of assembly, the propane 2-monooxygenase multicomponent enzyme system is composed of an electron transfer component and a monooxygenase component interacting with the effector protein MimD. The electron transfer component is composed of a reductase (MimB), and the monooxygenase component is formed by a large subunit (MimA) and a small subunit (MimC). Requires FAD as cofactor. It depends on [2Fe-2S] cluster as a cofactor.

Its function is as follows. Reductase component of the propane 2-monooxygenase multicomponent enzyme system which is involved in the degradation of propane via the O2-dependent hydroxylation of propane. Reductase catalyzes the transfer of electrons from NADH or NADPH to monooxygenase. In Mycolicibacterium goodii (Mycobacterium goodii), this protein is Propane 2-monooxygenase, reductase component.